The following is a 482-amino-acid chain: uncharacterized protein (482 aa).

Residues 231-459 (FEGNAGFYEI…FDACNHYLID (229 aa)) form the AB hydrolase-1 domain.

This is an uncharacterized protein from Caenorhabditis elegans.